We begin with the raw amino-acid sequence, 162 residues long: Putative 4-hydroxy-4-methyl-2-oxoglutarate aldolase (162 aa).

Residues 75-78 and Arg-97 each bind substrate; that span reads GDML. An a divalent metal cation-binding site is contributed by Asp-98.

Belongs to the class II aldolase/RraA-like family. In terms of assembly, homotrimer. A divalent metal cation serves as cofactor.

It carries out the reaction 4-hydroxy-4-methyl-2-oxoglutarate = 2 pyruvate. It catalyses the reaction oxaloacetate + H(+) = pyruvate + CO2. Its function is as follows. Catalyzes the aldol cleavage of 4-hydroxy-4-methyl-2-oxoglutarate (HMG) into 2 molecules of pyruvate. Also contains a secondary oxaloacetate (OAA) decarboxylase activity due to the common pyruvate enolate transition state formed following C-C bond cleavage in the retro-aldol and decarboxylation reactions. The sequence is that of Putative 4-hydroxy-4-methyl-2-oxoglutarate aldolase from Ectopseudomonas mendocina (strain ymp) (Pseudomonas mendocina).